The sequence spans 449 residues: MSHIKFDYSKVLDKFVAPHEVEYMQSQVTAADELIRKXTGAGSDFLGWLDLPEKYDREEFDRILKAAEQIKSDSDVLVVIGIGGSYLGAKAAIDFLNHHFANLQTKEERKAPQILYAGNSISSTYLADLVEYVADKDFSVNVISKSGTTTEPAIAFRVFKELLVKKYGQEEANKRIYATTDRQKGAVKVEADANGWETFVVPDDIGGRFSVLTAVGLLPIAASGADIKALMEGANAARKDYTSDKISENEAYQYAAVRNILYRKGYATEILVNYEPSLQYFSEWWKQLAGESEGKDQKGIYPTSANFSTDLHSLGQFIQEGTRIMFETVVRVDKPRKNVLIPTLEEDLDGLGYLQGKDVDFVNKKATDGVLLAHTDGDVPNMYVTLPEQDAFTLGYTIYFFELAIALSGYLNAINPFDQPGVEAYKRNMFALLGKPGFEELSKELNARL.

The active-site Proton donor is Glu291. Catalysis depends on residues His312 and Lys426.

Belongs to the GPI family.

The protein resides in the cytoplasm. It catalyses the reaction alpha-D-glucose 6-phosphate = beta-D-fructose 6-phosphate. It participates in carbohydrate biosynthesis; gluconeogenesis. The protein operates within carbohydrate degradation; glycolysis; D-glyceraldehyde 3-phosphate and glycerone phosphate from D-glucose: step 2/4. Its function is as follows. Catalyzes the reversible isomerization of glucose-6-phosphate to fructose-6-phosphate. The sequence is that of Glucose-6-phosphate isomerase from Streptococcus pneumoniae serotype 19F (strain G54).